The chain runs to 315 residues: Methionyl-tRNA formyltransferase (315 aa).

113-116 (SLLP) contacts (6S)-5,6,7,8-tetrahydrofolate.

The protein belongs to the Fmt family.

The enzyme catalyses L-methionyl-tRNA(fMet) + (6R)-10-formyltetrahydrofolate = N-formyl-L-methionyl-tRNA(fMet) + (6S)-5,6,7,8-tetrahydrofolate + H(+). In terms of biological role, attaches a formyl group to the free amino group of methionyl-tRNA(fMet). The formyl group appears to play a dual role in the initiator identity of N-formylmethionyl-tRNA by promoting its recognition by IF2 and preventing the misappropriation of this tRNA by the elongation apparatus. This chain is Methionyl-tRNA formyltransferase, found in Escherichia coli O45:K1 (strain S88 / ExPEC).